A 183-amino-acid chain; its full sequence is Glutathione-regulated potassium-efflux system ancillary protein KefG (183 aa).

Belongs to the NAD(P)H dehydrogenase (quinone) family. KefG subfamily. In terms of assembly, interacts with KefB.

It is found in the cell inner membrane. It carries out the reaction a quinone + NADH + H(+) = a quinol + NAD(+). It catalyses the reaction a quinone + NADPH + H(+) = a quinol + NADP(+). Regulatory subunit of a potassium efflux system that confers protection against electrophiles. Required for full activity of KefB. The polypeptide is Glutathione-regulated potassium-efflux system ancillary protein KefG (Pectobacterium atrosepticum (strain SCRI 1043 / ATCC BAA-672) (Erwinia carotovora subsp. atroseptica)).